Reading from the N-terminus, the 245-residue chain is uncharacterized protein (245 aa).

The N-terminal stretch at 1–18 (MKSAAILALLAQALAVTA) is a signal peptide. Positions 21-66 (VEGDRTPGTRTLDLPNFPGGSVPTRGVEKRADLPPDNGGGNAPDPD) are disordered. Asparagine 189 and asparagine 225 each carry an N-linked (GlcNAc...) asparagine glycan.

It is found in the secreted. This is an uncharacterized protein from Arthroderma benhamiae (strain ATCC MYA-4681 / CBS 112371) (Trichophyton mentagrophytes).